The primary structure comprises 501 residues: Lysine--tRNA ligase (501 aa).

Positions 404 and 411 each coordinate Mg(2+).

Belongs to the class-II aminoacyl-tRNA synthetase family. Homodimer. It depends on Mg(2+) as a cofactor.

It is found in the cytoplasm. The enzyme catalyses tRNA(Lys) + L-lysine + ATP = L-lysyl-tRNA(Lys) + AMP + diphosphate. This is Lysine--tRNA ligase (lysS) from Campylobacter jejuni subsp. jejuni serotype O:2 (strain ATCC 700819 / NCTC 11168).